Reading from the N-terminus, the 78-residue chain is WAP four-disulfide core domain protein 12 (78 aa).

The N-terminal stretch at 1-21 (MWPNSILVLTVLLISSTLVTG) is a signal peptide. Residues 25–72 (KGAEKGVCPPDNVRCIRGEDPQCHNDNDCKDQKICCYWHCGFKCVQPV) enclose the WAP domain. Disulfide bonds link Cys-32–Cys-60, Cys-39–Cys-64, Cys-47–Cys-59, and Cys-53–Cys-68.

It localises to the secreted. Functionally, antibacterial protein. Putative acid-stable proteinase inhibitor. The sequence is that of WAP four-disulfide core domain protein 12 from Rattus norvegicus (Rat).